Reading from the N-terminus, the 163-residue chain is Large ribosomal subunit protein uL11 (163 aa).

Residues 1–26 (MAETIEVLVAGGQADPGPPLGPELGP) are disordered.

This sequence belongs to the universal ribosomal protein uL11 family. In terms of assembly, part of the ribosomal stalk of the 50S ribosomal subunit. Interacts with L10 and the large rRNA to form the base of the stalk. L10 forms an elongated spine to which L12 dimers bind in a sequential fashion forming a multimeric L10(L12)X complex.

Forms part of the ribosomal stalk which helps the ribosome interact with GTP-bound translation factors. This is Large ribosomal subunit protein uL11 from Halobacterium salinarum (strain ATCC 29341 / DSM 671 / R1).